Here is an 882-residue protein sequence, read N- to C-terminus: MTGNEIRSRFLKFFQDHGHTVVPSSALIPHNDPTLLFINAGMNQFKDVFLGREKRDYVRATSAQKCVRAGGKHNDLENVGQTARHHTFFEMLGNFSFGDYFKKEAIDHAWKFLTEEMGLPKDKLWVTVFREDDEAYDIWRDQQGIPEERLIRMGEKDNFWSMGDTGPCGPCSEILIDQGESMSCGDECGIGKCDCDRYLELWNLVFMQFNRDADGTMTPLPKPSIDTGMGLERITAVMQGVQSNYDCDLLRGIIAHVEELSGKRYGDNAEHDMSMRVIADHSRATAFLIADGVLPSNEGRGYVLRRIMRRAARHAKMLGFADPVLYRTATFVLQSMAEAYPEPAQRADYVAKIVKIEEERFIQTLDNGLRILTEEVERLKAANATVLPGDVAFKLYDTFGFPLDLTADILRGENVTIDEDGFEACMEEQRQKAREHWKGSGEEAISGIYRQLAEEGARTDFTGYGELTGQSEILAILLDGQPVSSAPAGAKVEIVTAATPFYGESGGQTGDCGTLAAGDAEVTITDTKKPLPELFVHVGEIAAGTLQTGETATLTVDRERRQATALNHTATHLLQAALVEVLGEHVKQAGSLVTPERLRFDFIHFSAMSAEELERVETLVNCRIRENAGVDTREMDHEQAVAEGATALFGEKYGDKVRVVRVGDISMELCGGTHANASGDIGLFKILQETGIAAGVRRIEAVTGAKALQVVRDQERTLDDLASLIKTDRPQLEARLRKLLERQKELEREIESLQGKLNADQAGDLLQQATEIDGISVVCGRVDNLDGKALRELADQVRDRLSSGVLILGSAHEGKAGLLVAVTKDLTKRLQAGALVKQLAAMVGGGGGGRPDLAQAGGSKPEQLDEALASVPQRISEALNAA.

The Zn(2+) site is built by histidine 568, histidine 572, cysteine 670, and histidine 674.

Belongs to the class-II aminoacyl-tRNA synthetase family. Requires Zn(2+) as cofactor.

The protein localises to the cytoplasm. The catalysed reaction is tRNA(Ala) + L-alanine + ATP = L-alanyl-tRNA(Ala) + AMP + diphosphate. Functionally, catalyzes the attachment of alanine to tRNA(Ala) in a two-step reaction: alanine is first activated by ATP to form Ala-AMP and then transferred to the acceptor end of tRNA(Ala). Also edits incorrectly charged Ser-tRNA(Ala) and Gly-tRNA(Ala) via its editing domain. This chain is Alanine--tRNA ligase, found in Syntrophotalea carbinolica (strain DSM 2380 / NBRC 103641 / GraBd1) (Pelobacter carbinolicus).